The primary structure comprises 276 residues: Diaminopimelate epimerase (276 aa).

Asparagine 13, glutamine 46, and asparagine 66 together coordinate substrate. Cysteine 75 serves as the catalytic Proton donor. Substrate is bound by residues 76–77 (GN), asparagine 159, asparagine 192, and 210–211 (ER). Cysteine 219 serves as the catalytic Proton acceptor. A substrate-binding site is contributed by 220–221 (GT).

Belongs to the diaminopimelate epimerase family. As to quaternary structure, homodimer.

It localises to the cytoplasm. It carries out the reaction (2S,6S)-2,6-diaminopimelate = meso-2,6-diaminopimelate. The protein operates within amino-acid biosynthesis; L-lysine biosynthesis via DAP pathway; DL-2,6-diaminopimelate from LL-2,6-diaminopimelate: step 1/1. Functionally, catalyzes the stereoinversion of LL-2,6-diaminopimelate (L,L-DAP) to meso-diaminopimelate (meso-DAP), a precursor of L-lysine and an essential component of the bacterial peptidoglycan. This Pseudoalteromonas translucida (strain TAC 125) protein is Diaminopimelate epimerase.